A 188-amino-acid chain; its full sequence is Elongation factor P (188 aa).

K34 is subject to N6-(3,6-diaminohexanoyl)-5-hydroxylysine.

The protein belongs to the elongation factor P family. May be beta-lysylated on the epsilon-amino group of Lys-34 by the combined action of EpmA and EpmB, and then hydroxylated on the C5 position of the same residue by EpmC (if this protein is present). Lysylation is critical for the stimulatory effect of EF-P on peptide-bond formation. The lysylation moiety may extend toward the peptidyltransferase center and stabilize the terminal 3-CCA end of the tRNA. Hydroxylation of the C5 position on Lys-34 may allow additional potential stabilizing hydrogen-bond interactions with the P-tRNA.

It is found in the cytoplasm. It functions in the pathway protein biosynthesis; polypeptide chain elongation. Its function is as follows. Involved in peptide bond synthesis. Alleviates ribosome stalling that occurs when 3 or more consecutive Pro residues or the sequence PPG is present in a protein, possibly by augmenting the peptidyl transferase activity of the ribosome. Modification of Lys-34 is required for alleviation. The polypeptide is Elongation factor P (Erwinia tasmaniensis (strain DSM 17950 / CFBP 7177 / CIP 109463 / NCPPB 4357 / Et1/99)).